Reading from the N-terminus, the 358-residue chain is MQKNDDLLRERRKDEHVALGVKQNEQLAPSSLEDIQLIGTSIPRYNVKDIDLTTTIVGTNVPFPFYINAMTGGSRHTKKINAELAEIAREVAIPMAVGSQSAALKNSSLIDTYKIVREINPNGMILANISPEVALQEGLRAIEMLEADALQIHINPAQELVMQEGDRSFSHWLTRIEKYVKLSPVPVVVKEVGFGMTRETVATLASVGVQSVDLAGKGGTNFAQIENDRRRDQAYDFLLDWGISTGQALIDMQHQDAPKIAYLASGGIRNPLDIVKALALGADSVGMAGQIIYSLKKEGLTKTIEKLELWKEQLRSLFVLADAKNISELKTTPLIISGELAKWGTLREIDLVKLANRK.

12–13 contacts substrate; it reads RK. Residues 69–71, S99, and N128 contribute to the FMN site; that span reads AMT. Q158 provides a ligand contact to substrate. E159 contributes to the Mg(2+) binding site. FMN is bound by residues K190, T220, 267–269, and 288–289; these read GIR and AG.

It belongs to the IPP isomerase type 2 family. Homooctamer. Dimer of tetramers. The cofactor is FMN. NADPH is required as a cofactor. Mg(2+) serves as cofactor.

The protein resides in the cytoplasm. It catalyses the reaction isopentenyl diphosphate = dimethylallyl diphosphate. In terms of biological role, involved in the biosynthesis of isoprenoids. Catalyzes the 1,3-allylic rearrangement of the homoallylic substrate isopentenyl (IPP) to its allylic isomer, dimethylallyl diphosphate (DMAPP). The sequence is that of Isopentenyl-diphosphate delta-isomerase from Listeria monocytogenes serotype 4a (strain HCC23).